The primary structure comprises 163 residues: Nucleotide-binding protein BSU11020 (163 aa).

It belongs to the YajQ family.

Functionally, nucleotide-binding protein. This chain is Nucleotide-binding protein BSU11020 (yitK), found in Bacillus subtilis (strain 168).